The sequence spans 374 residues: MSDADSLSCSLTLESDEYDEEEYDTNLSKLLENKTLNWIFVGGKGGVGKTTTSCSIAVQLAKRRESVLLLSTDPAHNTSDAFNQKFTNQPTLINSFDNLYCMEIDTTYSENTAFKLNKTEFFDNIIPELLQSFPGIDEALCFAELMQSIKNMKYSVIVFDTAPTGHTLRLLAFPELLKKALGYLINLREKLKGTLNMLKSFTNNEMELEGIYEKINHLNAMSISIQSNFQNPLKTTFVCVCIPEFLSVYETERLIQELTKKNISCYNIVVNQVVFPLDSMTVDVAHCEGLLKQIKDKQVQESFSSLVQKTKELEDVYISRRKLQSKYLTQIKNLYGNDFHIVCMPQLKSEIRGLQNISNFSEMLLESKEIPIYR.

44–51 (KGGVGKTT) lines the ATP pocket. D73 is a catalytic residue. Positions 244 and 271 each coordinate ATP.

This sequence belongs to the arsA ATPase family. Homodimer.

It is found in the cytoplasm. It localises to the endoplasmic reticulum. In terms of biological role, ATPase required for the post-translational delivery of tail-anchored (TA) proteins to the endoplasmic reticulum. Recognizes and selectively binds the transmembrane domain of TA proteins in the cytosol. This complex then targets to the endoplasmic reticulum by membrane-bound receptors, where the tail-anchored protein is released for insertion. This process is regulated by ATP binding and hydrolysis. ATP binding drives the homodimer towards the closed dimer state, facilitating recognition of newly synthesized TA membrane proteins. ATP hydrolysis is required for insertion. Subsequently, the homodimer reverts towards the open dimer state, lowering its affinity for the membrane-bound receptor, and returning it to the cytosol to initiate a new round of targeting. This is ATPase ASNA1 homolog from Plasmodium vivax (strain Salvador I).